Here is a 379-residue protein sequence, read N- to C-terminus: 23S rRNA (uracil(747)-C(5))-methyltransferase RlmC (379 aa).

Cys3, Cys11, Cys14, and Cys86 together coordinate [4Fe-4S] cluster. 4 residues coordinate S-adenosyl-L-methionine: Gln211, Phe240, Glu262, and Asn310. Cys337 (nucleophile) is an active-site residue.

Belongs to the class I-like SAM-binding methyltransferase superfamily. RNA M5U methyltransferase family. RlmC subfamily.

The catalysed reaction is uridine(747) in 23S rRNA + S-adenosyl-L-methionine = 5-methyluridine(747) in 23S rRNA + S-adenosyl-L-homocysteine + H(+). Functionally, catalyzes the formation of 5-methyl-uridine at position 747 (m5U747) in 23S rRNA. In Halothiobacillus neapolitanus (strain ATCC 23641 / c2) (Thiobacillus neapolitanus), this protein is 23S rRNA (uracil(747)-C(5))-methyltransferase RlmC.